Consider the following 1042-residue polypeptide: Atrial natriuretic peptide-converting enzyme (1042 aa).

Positions 1 to 25 (MKQSPALAPEERCRRAGSPKPVLRA) are disordered. Residues 1 to 45 (MKQSPALAPEERCRRAGSPKPVLRADDNNMGNGCSQKLATANLLR) are Cytoplasmic-facing. Positions 26–29 (DDNN) match the DDNN motif motif. Residues 46–66 (FLLLVLIPCICALVLLLVILL) traverse the membrane as a helical; Signal-anchor for type II membrane protein segment. Residues 67–1042 (SYVGTLQKVY…QIYIQTFLLN (976 aa)) lie on the Extracellular side of the membrane. N-linked (GlcNAc...) asparagine glycans are attached at residues asparagine 80, asparagine 104, asparagine 135, and asparagine 141. The 126-residue stretch at 134-259 (RNTSACMNIT…SNVSRICFSP (126 aa)) folds into the FZ 1 domain. 8 cysteine pairs are disulfide-bonded: cysteine 139/cysteine 199, cysteine 147/cysteine 192, cysteine 183/cysteine 223, cysteine 212/cysteine 256, cysteine 216/cysteine 240, cysteine 269/cysteine 282, cysteine 277/cysteine 295, and cysteine 289/cysteine 304. Asparagine 231, asparagine 245, and asparagine 251 each carry an N-linked (GlcNAc...) asparagine glycan. LDL-receptor class A domains lie at 268-304 (LCGR…EAHC), 305-340 (NCSE…EQNC), 341-377 (DCNP…EVNC), and 378-415 (SCHS…ENCS). An N-linked (GlcNAc...) asparagine glycan is attached at asparagine 305. Intrachain disulfides connect cysteine 306–cysteine 318, cysteine 313–cysteine 331, cysteine 325–cysteine 340, cysteine 342–cysteine 355, cysteine 350–cysteine 368, cysteine 362–cysteine 377, cysteine 379–cysteine 392, cysteine 387–cysteine 405, and cysteine 399–cysteine 414. Residue asparagine 320 is glycosylated (N-linked (GlcNAc...) asparagine). An N-linked (GlcNAc...) asparagine glycan is attached at asparagine 376. N-linked (GlcNAc...) asparagine glycans are attached at residues asparagine 413, asparagine 446, asparagine 451, and asparagine 469. An FZ 2 domain is found at 450–573 (NNCSQCEPIT…NSDNQTCLMP (124 aa)). 14 cysteine pairs are disulfide-bonded: cysteine 455–cysteine 518, cysteine 463–cysteine 511, cysteine 502–cysteine 540, cysteine 529–cysteine 570, cysteine 533–cysteine 557, cysteine 580–cysteine 592, cysteine 587–cysteine 605, cysteine 599–cysteine 614, cysteine 616–cysteine 630, cysteine 624–cysteine 643, cysteine 637–cysteine 652, cysteine 655–cysteine 667, cysteine 662–cysteine 680, and cysteine 674–cysteine 689. Residue asparagine 567 is glycosylated (N-linked (GlcNAc...) asparagine). LDL-receptor class A domains lie at 579 to 614 (ECSP…EENC), 615 to 653 (GCKE…KNCS), and 654 to 689 (FCQD…EWDC). An N-linked (GlcNAc...) asparagine glycan is attached at asparagine 651. An SRCR domain is found at 690-801 (VTLSINVNSS…RRPAARMNKR (112 aa)). 2 N-linked (GlcNAc...) asparagine glycosylation sites follow: asparagine 697 and asparagine 761. Disulfide bonds link cysteine 790/cysteine 912, cysteine 828/cysteine 844, cysteine 926/cysteine 991, cysteine 955/cysteine 970, and cysteine 981/cysteine 1010. A Peptidase S1 domain is found at 802-1035 (ILGGRTSRPG…FVEWIKRQIY (234 aa)). Residues histidine 843 and aspartate 892 each act as charge relay system in the active site. The Charge relay system role is filled by serine 985. Asparagine 1022 is a glycosylation site (N-linked (GlcNAc...) asparagine).

This sequence belongs to the peptidase S1 family. N-glycosylated; required for processing and activation. Post-translationally, activated through proteolytic processing by a trypsin-like protease; cleaved into a N-terminal propeptide and an activated corin protease fragment. Different soluble forms are produced by cleavage and autocatalytic cleavage: Atrial natriuretic peptide-converting enzyme, 180 kDa soluble fragment is produced by cleavage by ADAM10, while 160 kDa and 100 kDa soluble fragments are produced by autocatalytic cleavage. Cleavage by ADAM10 to produce soluble 180 kDa soluble fragment takes place after the transmembrane region and before FZ 1. In terms of processing, a disulfide bond links the activated corin protease fragment and the N-terminal propeptide. The disulfide bond also links the activated corin protease fragment with soluble fragments (100 kDa, 160 kDa and 180 kDa fragments). In terms of tissue distribution, highly expressed in heart. Expressed in heart myocytes. Also expressed in pregnant uterus. Detected in blood, in plasma as well as in serum (at protein level).

Its subcellular location is the cell membrane. The protein localises to the secreted. With respect to regulation, inhibited in a dose-dependent manner by non-specific trypsin-like serine protease inhibitors including benzamidine. In terms of biological role, serine-type endopeptidase involved in atrial natriuretic peptide (NPPA) and brain natriuretic peptide (NPPB) processing. Converts through proteolytic cleavage the non-functional propeptides NPPA and NPPB into their active hormones, ANP and BNP(1-32) respectively, thereby regulating blood pressure in the heart and promoting natriuresis, diuresis and vasodilation. Proteolytic cleavage of pro-NPPA also plays a role in female pregnancy by promoting trophoblast invasion and spiral artery remodeling in uterus. Also acts as a regulator of sodium reabsorption in kidney. Functionally, has weaker endopeptidase activity compared to isoform 1. The protein is Atrial natriuretic peptide-converting enzyme (CORIN) of Homo sapiens (Human).